Reading from the N-terminus, the 447-residue chain is Tubulin beta chain (447 aa).

GTP-binding residues include glutamine 11, glutamate 69, serine 138, glycine 142, threonine 143, glycine 144, asparagine 204, and asparagine 226. Glutamate 69 provides a ligand contact to Mg(2+). Positions 424–447 (QYQEASVSEGEEEYDEEAPLEGEE) are disordered. Acidic residues predominate over residues 432–447 (EGEEEYDEEAPLEGEE).

Belongs to the tubulin family. In terms of assembly, dimer of alpha and beta chains. A typical microtubule is a hollow water-filled tube with an outer diameter of 25 nm and an inner diameter of 15 nM. Alpha-beta heterodimers associate head-to-tail to form protofilaments running lengthwise along the microtubule wall with the beta-tubulin subunit facing the microtubule plus end conferring a structural polarity. Microtubules usually have 13 protofilaments but different protofilament numbers can be found in some organisms and specialized cells. The cofactor is Mg(2+).

The protein resides in the cytoplasm. It localises to the cytoskeleton. Its function is as follows. Tubulin is the major constituent of microtubules, a cylinder consisting of laterally associated linear protofilaments composed of alpha- and beta-tubulin heterodimers. Microtubules grow by the addition of GTP-tubulin dimers to the microtubule end, where a stabilizing cap forms. Below the cap, tubulin dimers are in GDP-bound state, owing to GTPase activity of alpha-tubulin. In Cercospora beticola (Sugarbeet leaf spot fungus), this protein is Tubulin beta chain (TUB1).